The primary structure comprises 212 residues: Holliday junction branch migration complex subunit RuvA (212 aa).

Residues 1-70 (MISYLKGSPI…EDQQILYGFS (70 aa)) form a domain I region. Residues 71 to 149 (TTAERELFRQ…QWRKMVGVTV (79 aa)) are domain II. The segment at 150–160 (TSSAAMPSLEI) is flexible linker. The segment at 160–212 (ILEDIEMTLLALGYTNEEINKAISTLSQDNLMLKNTNTEEWIKEAIAWLSQGT) is domain III.

This sequence belongs to the RuvA family. As to quaternary structure, homotetramer. Forms an RuvA(8)-RuvB(12)-Holliday junction (HJ) complex. HJ DNA is sandwiched between 2 RuvA tetramers; dsDNA enters through RuvA and exits via RuvB. An RuvB hexamer assembles on each DNA strand where it exits the tetramer. Each RuvB hexamer is contacted by two RuvA subunits (via domain III) on 2 adjacent RuvB subunits; this complex drives branch migration. In the full resolvosome a probable DNA-RuvA(4)-RuvB(12)-RuvC(2) complex forms which resolves the HJ.

Its subcellular location is the cytoplasm. In terms of biological role, the RuvA-RuvB-RuvC complex processes Holliday junction (HJ) DNA during genetic recombination and DNA repair, while the RuvA-RuvB complex plays an important role in the rescue of blocked DNA replication forks via replication fork reversal (RFR). RuvA specifically binds to HJ cruciform DNA, conferring on it an open structure. The RuvB hexamer acts as an ATP-dependent pump, pulling dsDNA into and through the RuvAB complex. HJ branch migration allows RuvC to scan DNA until it finds its consensus sequence, where it cleaves and resolves the cruciform DNA. This Crocosphaera subtropica (strain ATCC 51142 / BH68) (Cyanothece sp. (strain ATCC 51142)) protein is Holliday junction branch migration complex subunit RuvA.